A 525-amino-acid polypeptide reads, in one-letter code: Cytochrome P450 monooxygenase ltmJ (525 aa).

A helical membrane pass occupies residues 21 to 43 (LTWWQTIVSFIIFCIMCSWLPGN). An N-linked (GlcNAc...) asparagine glycan is attached at N136. C465 contributes to the heme binding site.

It belongs to the cytochrome P450 family. The cofactor is heme.

It localises to the membrane. It functions in the pathway secondary metabolite biosynthesis. Its function is as follows. Cytochrome P450 monooxygenase; part of the gene clusters that mediates the biosynthesis of lolitrems, indole-diterpene mycotoxins that are potent tremorgens in mammals, and are synthesized by clavicipitaceous fungal endophytes in association with their grass hosts. The geranylgeranyl diphosphate (GGPP) synthase ltmG is proposed to catalyze the first step in lolitrem biosynthesis. LtmG catalyzes a series of iterative condensations of isopentenyl diphosphate (IPP) with dimethylallyl diphosphate (DMAPP), geranyl diphosphate (GPP), and farnesyl diphosphate (FPP), to form GGPP. GGPP then condenses with indole-3-glycerol phosphate to form 3-geranylgeranylindole, an acyclic intermediate, to be incorporated into paxilline. Either ltmG or ltmC could be responsible for this step, as both are putative prenyl transferases. The FAD-dependent monooxygenase ltmM then catalyzes the epoxidation of the two terminal alkenes of the geranylgeranyl moiety, which is subsequently cyclized by ltmB, to paspaline. The cytochrome P450 monooxygenases ltmQ and ltmP can sequentially oxidize paspaline to terpendole E and terpendole F. Alternatively, ltmP converts paspaline to an intermediate which is oxidized by ltmQ to terpendole F. LtmF, ltmK, ltmE and ltmJ appear to be unique to the epichloe endophytes. The prenyltransferase ltmF is involved in the 27-hydroxyl-O-prenylation. The cytochrome P450 monooxygenase ltmK is required for the oxidative acetal ring formation. The multi-functional prenyltransferase ltmE is required for C20- and C21-prenylations of the indole ring of paspalanes and acts together with the cytochrome P450 monooxygenase ltmJ to yield lolitremanes by multiple oxidations and ring closures. The stereoisomer pairs of lolitriol and lolitrem N or lolitrem B and lolitrem F may be attributed to variations in the way in which ring closure can occur under the action of ltmJ. While the major product of this pathway is lolitrem B, the prenyl transferases and cytochrome P450 monooxygenases identified in this pathway have a remarkable versatility in their regio- and stereo-specificities to generate a diverse range of metabolites that are products of a metabolic grid rather than a linear pathway. This is Cytochrome P450 monooxygenase ltmJ (ltmJ) from Epichloe festucae var. lolii (Neotyphodium lolii).